The chain runs to 391 residues: NADH-quinone oxidoreductase subunit D (391 aa).

Belongs to the complex I 49 kDa subunit family. In terms of assembly, NDH-1 is composed of 14 different subunits. Subunits NuoB, C, D, E, F, and G constitute the peripheral sector of the complex.

It is found in the cell inner membrane. The catalysed reaction is a quinone + NADH + 5 H(+)(in) = a quinol + NAD(+) + 4 H(+)(out). In terms of biological role, NDH-1 shuttles electrons from NADH, via FMN and iron-sulfur (Fe-S) centers, to quinones in the respiratory chain. The immediate electron acceptor for the enzyme in this species is believed to be ubiquinone. Couples the redox reaction to proton translocation (for every two electrons transferred, four hydrogen ions are translocated across the cytoplasmic membrane), and thus conserves the redox energy in a proton gradient. In Rickettsia felis (strain ATCC VR-1525 / URRWXCal2) (Rickettsia azadi), this protein is NADH-quinone oxidoreductase subunit D.